The primary structure comprises 282 residues: Formamidopyrimidine-DNA glycosylase (282 aa).

Pro2 (schiff-base intermediate with DNA) is an active-site residue. The active-site Proton donor is Glu3. Catalysis depends on Lys61, which acts as the Proton donor; for beta-elimination activity. DNA contacts are provided by His93, Arg112, and Lys158. Residues Asp244–Pro278 form an FPG-type zinc finger. Arg268 serves as the catalytic Proton donor; for delta-elimination activity.

This sequence belongs to the FPG family. As to quaternary structure, monomer. Requires Zn(2+) as cofactor.

The enzyme catalyses Hydrolysis of DNA containing ring-opened 7-methylguanine residues, releasing 2,6-diamino-4-hydroxy-5-(N-methyl)formamidopyrimidine.. The catalysed reaction is 2'-deoxyribonucleotide-(2'-deoxyribose 5'-phosphate)-2'-deoxyribonucleotide-DNA = a 3'-end 2'-deoxyribonucleotide-(2,3-dehydro-2,3-deoxyribose 5'-phosphate)-DNA + a 5'-end 5'-phospho-2'-deoxyribonucleoside-DNA + H(+). Functionally, involved in base excision repair of DNA damaged by oxidation or by mutagenic agents. Acts as a DNA glycosylase that recognizes and removes damaged bases. Has a preference for oxidized purines, such as 7,8-dihydro-8-oxoguanine (8-oxoG). Has AP (apurinic/apyrimidinic) lyase activity and introduces nicks in the DNA strand. Cleaves the DNA backbone by beta-delta elimination to generate a single-strand break at the site of the removed base with both 3'- and 5'-phosphates. This is Formamidopyrimidine-DNA glycosylase from Mycolicibacterium gilvum (strain PYR-GCK) (Mycobacterium gilvum (strain PYR-GCK)).